A 384-amino-acid polypeptide reads, in one-letter code: S-adenosylmethionine synthase (384 aa).

His15 provides a ligand contact to ATP. Mg(2+) is bound at residue Asp17. A K(+)-binding site is contributed by Glu43. 2 residues coordinate L-methionine: Glu56 and Gln99. The segment at 99–109 is flexible loop; sequence QSPDINQGVDR. Residues 164–166, 231–232, Asp240, 246–247, Ala263, and Lys267 each bind ATP; these read DAK, RF, and RK. Residue Asp240 participates in L-methionine binding. Lys271 contacts L-methionine.

Belongs to the AdoMet synthase family. As to quaternary structure, homotetramer; dimer of dimers. It depends on Mg(2+) as a cofactor. Requires K(+) as cofactor.

The protein localises to the cytoplasm. The enzyme catalyses L-methionine + ATP + H2O = S-adenosyl-L-methionine + phosphate + diphosphate. It functions in the pathway amino-acid biosynthesis; S-adenosyl-L-methionine biosynthesis; S-adenosyl-L-methionine from L-methionine: step 1/1. In terms of biological role, catalyzes the formation of S-adenosylmethionine (AdoMet) from methionine and ATP. The overall synthetic reaction is composed of two sequential steps, AdoMet formation and the subsequent tripolyphosphate hydrolysis which occurs prior to release of AdoMet from the enzyme. The polypeptide is S-adenosylmethionine synthase (Shewanella halifaxensis (strain HAW-EB4)).